We begin with the raw amino-acid sequence, 262 residues long: MNKFLIIDGLNLVRRIYAAIPDETDMQSLTERVSSACTKLLRVHRPTHVAIVWDGDEISWRKQLYPNYKKGRKPMPEPLAQGLVALQDHLTAMHIGSIYAAAEADDVIATLAIKTAKAQGEAIIVSTDKGFSQLNHRQISQWDHFNQQYLDIAALEQKLGVERSQFLDLMALAGDSGNKIPGIAGIGPKSAAELLKTFRSLPTLFSSLSNLGAKQAKKLAEGKEMARLSYKLAQLQTDLPLNINLKDFRVIDSPPEKTINQD.

Asp-105 provides a ligand contact to Mg(2+). Residues 162–257 (ERSQFLDLMA…FRVIDSPPEK (96 aa)) form the 5'-3' exonuclease domain. Positions 172, 173, 181, 183, and 186 each coordinate K(+). The segment at 185–190 (GIGPKS) is interaction with DNA.

It belongs to the Xni family. It depends on Mg(2+) as a cofactor. K(+) serves as cofactor.

Has flap endonuclease activity. During DNA replication, flap endonucleases cleave the 5'-overhanging flap structure that is generated by displacement synthesis when DNA polymerase encounters the 5'-end of a downstream Okazaki fragment. This is Flap endonuclease Xni from Shewanella baltica (strain OS223).